Consider the following 164-residue polypeptide: Large ribosomal subunit protein bL9 (164 aa).

It belongs to the bacterial ribosomal protein bL9 family.

In terms of biological role, binds to the 23S rRNA. The polypeptide is Large ribosomal subunit protein bL9 (Psychrobacter sp. (strain PRwf-1)).